The chain runs to 379 residues: Anhydro-N-acetylmuramic acid kinase (379 aa).

9 to 16 is a binding site for ATP; the sequence is GTSADGVD.

Belongs to the anhydro-N-acetylmuramic acid kinase family.

It carries out the reaction 1,6-anhydro-N-acetyl-beta-muramate + ATP + H2O = N-acetyl-D-muramate 6-phosphate + ADP + H(+). Its pathway is amino-sugar metabolism; 1,6-anhydro-N-acetylmuramate degradation. It participates in cell wall biogenesis; peptidoglycan recycling. Functionally, catalyzes the specific phosphorylation of 1,6-anhydro-N-acetylmuramic acid (anhMurNAc) with the simultaneous cleavage of the 1,6-anhydro ring, generating MurNAc-6-P. Is required for the utilization of anhMurNAc either imported from the medium or derived from its own cell wall murein, and thus plays a role in cell wall recycling. The protein is Anhydro-N-acetylmuramic acid kinase of Parasynechococcus marenigrum (strain WH8102).